A 416-amino-acid chain; its full sequence is Glutamyl-tRNA reductase (416 aa).

Residues 49-52, Ser-105, 110-112, and Gln-116 contribute to the substrate site; these read TCNR and EPQ. The active-site Nucleophile is Cys-50. 185–190 provides a ligand contact to NADP(+); it reads GAGETI.

It belongs to the glutamyl-tRNA reductase family. In terms of assembly, homodimer.

The catalysed reaction is (S)-4-amino-5-oxopentanoate + tRNA(Glu) + NADP(+) = L-glutamyl-tRNA(Glu) + NADPH + H(+). Its pathway is porphyrin-containing compound metabolism; protoporphyrin-IX biosynthesis; 5-aminolevulinate from L-glutamyl-tRNA(Glu): step 1/2. In terms of biological role, catalyzes the NADPH-dependent reduction of glutamyl-tRNA(Glu) to glutamate 1-semialdehyde (GSA). This chain is Glutamyl-tRNA reductase, found in Shewanella halifaxensis (strain HAW-EB4).